Reading from the N-terminus, the 84-residue chain is Large ribosomal subunit protein bL27 (84 aa).

The span at 1-11 (MATTKAGGSTK) shows a compositional bias: polar residues. A disordered region spans residues 1-20 (MATTKAGGSTKNGRDSHSKR).

The protein belongs to the bacterial ribosomal protein bL27 family.

This Mycoplasmopsis synoviae (strain 53) (Mycoplasma synoviae) protein is Large ribosomal subunit protein bL27.